Consider the following 773-residue polypeptide: 5-methyltetrahydropteroyltriglutamate--homocysteine methyltransferase (773 aa).

5-methyltetrahydropteroyltri-L-glutamate is bound by residues Arg16–Lys19 and Lys116. L-homocysteine is bound by residues Ile437–Ser439 and Glu490. L-methionine contacts are provided by residues Ile437–Ser439 and Glu490. Residues Arg521–Cys522 and Trp567 contribute to the 5-methyltetrahydropteroyltri-L-glutamate site. Asp605 is an L-homocysteine binding site. Residue Asp605 coordinates L-methionine. Residue Glu611 participates in 5-methyltetrahydropteroyltri-L-glutamate binding. Residues His647, Cys649, and Glu671 each coordinate Zn(2+). Catalysis depends on His700, which acts as the Proton donor. Cys732 is a Zn(2+) binding site.

It belongs to the vitamin-B12 independent methionine synthase family. It depends on Zn(2+) as a cofactor.

It carries out the reaction 5-methyltetrahydropteroyltri-L-glutamate + L-homocysteine = tetrahydropteroyltri-L-glutamate + L-methionine. It participates in amino-acid biosynthesis; L-methionine biosynthesis via de novo pathway; L-methionine from L-homocysteine (MetE route): step 1/1. In terms of biological role, catalyzes the transfer of a methyl group from 5-methyltetrahydrofolate to homocysteine resulting in methionine formation. The polypeptide is 5-methyltetrahydropteroyltriglutamate--homocysteine methyltransferase (Alkalilimnicola ehrlichii (strain ATCC BAA-1101 / DSM 17681 / MLHE-1)).